Reading from the N-terminus, the 348-residue chain is D-alanine--D-alanine ligase (348 aa).

Residues 132–334 (KRILEVAGVP…YSDIIKELVV (203 aa)) form the ATP-grasp domain. Position 162–217 (162–217 (LEKLTFPVFVKPANMGSSVGISKAENESELRSAIDLALKYDSRILIEQGVVAREIE)) interacts with ATP. Mg(2+)-binding residues include Asp288, Glu301, and Asn303.

The protein belongs to the D-alanine--D-alanine ligase family. It depends on Mg(2+) as a cofactor. Requires Mn(2+) as cofactor.

The protein localises to the cytoplasm. It carries out the reaction 2 D-alanine + ATP = D-alanyl-D-alanine + ADP + phosphate + H(+). It participates in cell wall biogenesis; peptidoglycan biosynthesis. Cell wall formation. The sequence is that of D-alanine--D-alanine ligase from Streptococcus thermophilus (strain CNRZ 1066).